The primary structure comprises 193 residues: Ion-translocating oxidoreductase complex subunit A (193 aa).

The next 6 membrane-spanning stretches (helical) occupy residues 5-25 (ILLI…FLGL), 39-59 (IGMG…AYLV), 72-92 (LRTL…EMVI), 102-122 (LLGI…VALL), 134-154 (VIYG…FAAL), and 171-191 (SIAL…SGLV).

Belongs to the NqrDE/RnfAE family. In terms of assembly, the complex is composed of six subunits: RnfA, RnfB, RnfC, RnfD, RnfE and RnfG.

Its subcellular location is the cell inner membrane. Part of a membrane-bound complex that couples electron transfer with translocation of ions across the membrane. The polypeptide is Ion-translocating oxidoreductase complex subunit A (Histophilus somni (strain 129Pt) (Haemophilus somnus)).